The chain runs to 1005 residues: Non-structural polyprotein 1A (1005 aa).

4 consecutive transmembrane segments (helical) span residues 239-259 (PDGA…MDYM), 286-306 (DEIV…SLAY), 313-333 (VLIL…ALVA), and 344-364 (TLVL…YGLG). Residues His524, Asp556, and Ser621 each act as charge relay system; for serine protease activity in the active site. The residue at position 753 (Tyr753) is an O-(5'-phospho-RNA)-tyrosine. The interval 940 to 984 (PVIQQVEQQPQVEQQQQPQQPVVEEKKRTPPPKPQRKPKTGAKAK) is disordered. Residues 941 to 961 (VIQQVEQQPQVEQQQQPQQPV) show a composition bias toward low complexity.

It belongs to the astroviridae polyprotein 1A family. Monomer. Cleaved by the viral and host proteases. The protease is probably autocatalytically cleaved.

The protein resides in the host membrane. It carries out the reaction RNA(n) + a ribonucleoside 5'-triphosphate = RNA(n+1) + diphosphate. Functionally, responsible for the cleavage of the polyprotein into functional products. Protein covalently attached to the 5' extremity of the genomic and subgenomic RNAs. It may serve as a primer for the replicase. The polypeptide is Non-structural polyprotein 1A (ORF1) (Avian nephritis virus 1 (ANV-1)).